Reading from the N-terminus, the 172-residue chain is MSVLQVLTFPDDRLRTVAKPVEEVTPEIQKIVDDMIETMYDEEGIGLAATQVDIHKRIVVIDISETRDEPMVLINPEILEKRGEDGIEEGCLSVPGARALVPRAAEVTVKALDRDGKEYTFEADDLLAICVQHELDHLMGKLFVDYLSPLKRKRIQDKLAKIKRFNEKQQNA.

Positions 91 and 133 each coordinate Fe cation. Residue E134 is part of the active site. Residue H137 coordinates Fe cation.

This sequence belongs to the polypeptide deformylase family. Fe(2+) is required as a cofactor.

The enzyme catalyses N-terminal N-formyl-L-methionyl-[peptide] + H2O = N-terminal L-methionyl-[peptide] + formate. Functionally, removes the formyl group from the N-terminal Met of newly synthesized proteins. Requires at least a dipeptide for an efficient rate of reaction. N-terminal L-methionine is a prerequisite for activity but the enzyme has broad specificity at other positions. The chain is Peptide deformylase from Vibrio campbellii (strain ATCC BAA-1116).